We begin with the raw amino-acid sequence, 217 residues long: Large ribosomal subunit protein eL14 (217 aa).

Lysine 79 carries the post-translational modification N6-acetyllysine. N6-acetyllysine; alternate is present on lysine 85. Lysine 85 is modified (N6-succinyllysine; alternate). A Glycyl lysine isopeptide (Lys-Gly) (interchain with G-Cter in SUMO2) cross-link involves residue lysine 124. A Phosphoserine modification is found at serine 139. Positions 162 to 217 are disordered; it reads KVPAKKATGPGKKAAGQKAPAQKAAGQKAAPPAKGQKGQKTPAQKAPAPKAAGKKA. One copy of the 1-1; approximate repeat lies at 173–177; sequence KKAAG. The tract at residues 173–192 is 4 X 5 AA tandem repeats of Q-K-A-[APS]-X; sequence KKAAGQKAPAQKAAGQKAAP. A run of 5 repeats spans residues 178 to 182, 183 to 187, 188 to 192, 195 to 197, and 198 to 200. Residues 195–200 are 2 X 3 AA tandem repeats of K-G-Q; sequence KGQKGQ. Lysine 206 is subject to N6-succinyllysine.

This sequence belongs to the eukaryotic ribosomal protein eL14 family. Component of the large ribosomal subunit.

It localises to the cytoplasm. Component of the large ribosomal subunit. The ribosome is a large ribonucleoprotein complex responsible for the synthesis of proteins in the cell. This Mus musculus (Mouse) protein is Large ribosomal subunit protein eL14 (Rpl14).